We begin with the raw amino-acid sequence, 389 residues long: Chalcone synthase 1A (389 aa).

The active site involves cysteine 164.

This sequence belongs to the thiolase-like superfamily. Chalcone/stilbene synthases family.

The catalysed reaction is (E)-4-coumaroyl-CoA + 3 malonyl-CoA + 3 H(+) = 2',4,4',6'-tetrahydroxychalcone + 3 CO2 + 4 CoA. Its pathway is secondary metabolite biosynthesis; flavonoid biosynthesis. In terms of biological role, the primary product of this enzyme is 4,2',4',6'-tetrahydroxychalcone (also termed naringenin-chalcone or chalcone) which can under specific conditions spontaneously isomerize into naringenin. The chain is Chalcone synthase 1A (CHS1A) from Solanum tuberosum (Potato).